Here is a 423-residue protein sequence, read N- to C-terminus: Serine hydroxymethyltransferase (423 aa).

(6S)-5,6,7,8-tetrahydrofolate is bound by residues leucine 120 and 124 to 126 (GHL). An N6-(pyridoxal phosphate)lysine modification is found at lysine 229. Residue 353–355 (SPF) coordinates (6S)-5,6,7,8-tetrahydrofolate.

This sequence belongs to the SHMT family. As to quaternary structure, homodimer. The cofactor is pyridoxal 5'-phosphate.

It localises to the cytoplasm. It carries out the reaction (6R)-5,10-methylene-5,6,7,8-tetrahydrofolate + glycine + H2O = (6S)-5,6,7,8-tetrahydrofolate + L-serine. It functions in the pathway one-carbon metabolism; tetrahydrofolate interconversion. Its pathway is amino-acid biosynthesis; glycine biosynthesis; glycine from L-serine: step 1/1. Functionally, catalyzes the reversible interconversion of serine and glycine with tetrahydrofolate (THF) serving as the one-carbon carrier. This reaction serves as the major source of one-carbon groups required for the biosynthesis of purines, thymidylate, methionine, and other important biomolecules. Also exhibits THF-independent aldolase activity toward beta-hydroxyamino acids, producing glycine and aldehydes, via a retro-aldol mechanism. The polypeptide is Serine hydroxymethyltransferase (Prochlorococcus marinus subsp. pastoris (strain CCMP1986 / NIES-2087 / MED4)).